Reading from the N-terminus, the 681-residue chain is MSAFPISDIGGSWEYSHAPPTATSATGIPGFPEQSVGGLQLPFPGYTYVGASPLTQPRRHFPNSTPVLGNYAGLSSDREVIATSLNPYISKFSANAEWPISDIHQSKKSVYIPEERDVSNQFQTDKQQQQQFMKLPDPQMQVQLCDKELWDQFSRAGTEMIVTKTGRRMFPGYRIKISGLDPTAKYCVMLDIVNVDDHRYKFQHGEWTVAGRGEPHLPQRFFLHPNSPANGSKWMSEIISFHKVKLTNSIGRDVDGKIVLNSMHRYQPRVHIVRTDDISSVHMQRLCTFAFPQTVFITVTAYQNSEVTKLKIDNNPFAKGFREDGARAKKPRNQHNHFSDNDTSPYSEQRRSYYEPGSYTHLPYYNNSPMNVPSHHHYDNQTMNREFLPEAKRNRIMPESNSIHAPSLSVFHPGNENAVSQWQDVPDLNEMYNANDNNYNSVANQSIHNVQYTQNGITSHSPVQPVPHDNSFTYYNSSSPSSSDSNQSNVNASFSVMTTTHASHSINDIMRISEHADVTSPNINIPNTVETNVHSSDSGIGSSPPTPSDDDASNLIPGTEEIFKDDGKVLDGENLPDMSDLISLTERKESGEANANSHTEDFSRNPACQSGDTIESKDIQTLQVASVTDTYSYQKNYVENSSHQSYNNSQEFSYHSNAMPESNCESSVDPNLDWESNLLTM.

The segment at residues 149 to 323 is a DNA-binding region (T-box); that stretch reads LWDQFSRAGT…NNPFAKGFRE (175 aa). 4 disordered regions span residues 316-351, 456-489, 521-558, and 589-611; these read PFAK…EQRR, GITS…NQSN, PNIN…LIPG, and ESGE…CQSG. Low complexity predominate over residues 470–489; sequence NSFTYYNSSSPSSSDSNQSN. Positions 521–534 are enriched in polar residues; that stretch reads PNINIPNTVETNVH.

As to quaternary structure, monomer. Differentiating muscle and tailbud tip.

It localises to the nucleus. Functionally, involved in the transcriptional regulation of genes required for muscle differentiation. Binds to a palindromic site (called T site) and activates gene transcription when bound to such a site. This Halocynthia roretzi (Sea squirt) protein is T-box-containing protein 2 (T2).